Consider the following 406-residue polypeptide: MLLDHLKRAAAERDAQSLTRRRRIAHTACAPHQSVGGIDATPTPLLTFCSNDYLGLANHGSIAHALAEGAHRYGAGSGASHLVSGHSLAHAQLERELARWLAPYIPQAQALYFCTGYMANLAVLTSLGATGATLFCESLNHASLIDGARLARADVQRYPHGDAGALDALLAASTTALKLIVTDSVFSMDGDIAPLAALLEVAERHDAWIIVDDAHGFGVLGENGHGVLEHLGLRSERLIYIGTLGKAAGVAGAFVAAHETIVEHLINTARPYIYTTAAPPAVAHALLTSLEIIAGEEGRSRRAHLTGLIAQLRAGLAVLAAQAGWSLGESETAIQPLIVGDNAAALALSAALEAEGIRVGAIRPPTVPAGTARLRITLSASHSAADVARLLETIARAAPQLHKEAA.

Position 20 (Arg-20) interacts with substrate. 116–117 (GY) provides a ligand contact to pyridoxal 5'-phosphate. Residue His-141 participates in substrate binding. Residues Ser-187, His-215, and Thr-243 each contribute to the pyridoxal 5'-phosphate site. Lys-246 carries the post-translational modification N6-(pyridoxal phosphate)lysine. Thr-366 contacts substrate.

The protein belongs to the class-II pyridoxal-phosphate-dependent aminotransferase family. BioF subfamily. In terms of assembly, homodimer. Pyridoxal 5'-phosphate is required as a cofactor.

It carries out the reaction 6-carboxyhexanoyl-[ACP] + L-alanine + H(+) = (8S)-8-amino-7-oxononanoate + holo-[ACP] + CO2. It participates in cofactor biosynthesis; biotin biosynthesis. Catalyzes the decarboxylative condensation of pimeloyl-[acyl-carrier protein] and L-alanine to produce 8-amino-7-oxononanoate (AON), [acyl-carrier protein], and carbon dioxide. The sequence is that of 8-amino-7-oxononanoate synthase from Cupriavidus metallidurans (strain ATCC 43123 / DSM 2839 / NBRC 102507 / CH34) (Ralstonia metallidurans).